We begin with the raw amino-acid sequence, 110 residues long: Ubiquitin-related modifier 1 (110 aa).

G110 bears the 1-thioglycine mark. Residue G110 forms a Glycyl lysine isopeptide (Gly-Lys) (interchain with K-? in acceptor proteins) linkage.

It belongs to the URM1 family. Homodimer; homodimerization may provide an autoprotection to the highly active C-terminal residue before attacking its substrates. Forms a conjugate with the target protein AHP1. Post-translationally, C-terminal thiocarboxylation occurs in 2 steps, it is first acyl-adenylated (-COAMP) via the hesA/moeB/thiF part of UBA4, then thiocarboxylated (-COSH) via the rhodanese domain of UBA4.

It is found in the cytoplasm. Its pathway is tRNA modification; 5-methoxycarbonylmethyl-2-thiouridine-tRNA biosynthesis. In terms of biological role, acts as a sulfur carrier required for 2-thiolation of mcm(5)S(2)U at tRNA wobble positions of cytosolic tRNA(Lys), tRNA(Glu) and tRNA(Gln). Serves as sulfur donor in tRNA 2-thiolation reaction by being thiocarboxylated (-COSH) at its C-terminus by the MOCS3 homolog UBA4. The sulfur is then transferred to tRNA to form 2-thiolation of mcm(5)S(2)U. Prior mcm(5) tRNA modification by the elongator complex is required for 2-thiolation. Also acts as a ubiquitin-like protein (UBL) that is covalently conjugated via an isopeptide bond to lysine residues of target proteins such as AHP1. Conjugation does not depend on the canonical cascade of E2 ubiquitin-conjugating enzymes and/or E3 ligases. The conjugation reaction requires a thiocarboxylated C-terminus of URM1 and a peroxidatic cysteine in the target protein, as the sulfur atom of the URM1 thiocarboxyl group is transferred to redox-active cysteine residues in the target protein. Oxidative stress specifically induces the formation of UBL-protein conjugates. Covalent modification with URM1 promotes the phase separation of a wide range of proteins into condensates like stress granules. This chain is Ubiquitin-related modifier 1, found in Chaetomium thermophilum (strain DSM 1495 / CBS 144.50 / IMI 039719) (Thermochaetoides thermophila).